Here is a 138-residue protein sequence, read N- to C-terminus: Large ribosomal subunit protein uL16 (138 aa).

The protein belongs to the universal ribosomal protein uL16 family. In terms of assembly, part of the 50S ribosomal subunit.

Functionally, binds 23S rRNA and is also seen to make contacts with the A and possibly P site tRNAs. In Ureaplasma urealyticum serovar 10 (strain ATCC 33699 / Western), this protein is Large ribosomal subunit protein uL16.